The chain runs to 620 residues: Chaperone protein HscA homolog (620 aa).

It belongs to the heat shock protein 70 family.

Its function is as follows. Chaperone involved in the maturation of iron-sulfur cluster-containing proteins. Has a low intrinsic ATPase activity which is markedly stimulated by HscB. This is Chaperone protein HscA homolog from Shewanella sp. (strain ANA-3).